The sequence spans 257 residues: Ribosomal RNA small subunit methyltransferase J (257 aa).

Residues 107–108, 123–124, and aspartate 177 contribute to the S-adenosyl-L-methionine site; these read RD and ER.

This sequence belongs to the methyltransferase superfamily. RsmJ family.

The protein localises to the cytoplasm. It catalyses the reaction guanosine(1516) in 16S rRNA + S-adenosyl-L-methionine = N(2)-methylguanosine(1516) in 16S rRNA + S-adenosyl-L-homocysteine + H(+). In terms of biological role, specifically methylates the guanosine in position 1516 of 16S rRNA. In Haemophilus influenzae (strain ATCC 51907 / DSM 11121 / KW20 / Rd), this protein is Ribosomal RNA small subunit methyltransferase J.